The following is a 295-amino-acid chain: 5,10-methylenetetrahydrofolate reductase (295 aa).

Glutamate 28 (proton donor/acceptor) is an active-site residue. Threonine 59 is an NADH binding site. Histidine 89, arginine 119, glycine 120, aspartate 121, alanine 133, tyrosine 153, histidine 157, alanine 160, aspartate 166, asparagine 169, arginine 172, and lysine 173 together coordinate FAD. Residue aspartate 121 participates in (6S)-5-methyl-5,6,7,8-tetrahydrofolate binding. An NADH-binding site is contributed by glutamine 184. (6S)-5-methyl-5,6,7,8-tetrahydrofolate is bound by residues glutamine 184, glutamine 220, and lysine 280.

The protein belongs to the methylenetetrahydrofolate reductase family. FAD is required as a cofactor.

The enzyme catalyses (6S)-5-methyl-5,6,7,8-tetrahydrofolate + NAD(+) = (6R)-5,10-methylene-5,6,7,8-tetrahydrofolate + NADH + H(+). It functions in the pathway one-carbon metabolism; tetrahydrofolate interconversion. Its pathway is amino-acid biosynthesis; L-methionine biosynthesis via de novo pathway. Its function is as follows. Catalyzes the NADH-dependent reduction of 5,10-methylenetetrahydrofolate to 5-methyltetrahydrofolate. Is required to provide the methyl group necessary for methionine synthetase to convert homocysteine to methionine; the methyl group is given by 5-methyltetrahydrofolate. The sequence is that of 5,10-methylenetetrahydrofolate reductase (metF) from Buchnera aphidicola subsp. Baizongia pistaciae (strain Bp).